A 298-amino-acid polypeptide reads, in one-letter code: Acetyl-coenzyme A carboxylase carboxyl transferase subunit beta (298 aa).

The tract at residues 1–21 is disordered; sequence MNQEVKSGKVLSPSTPWTQRP. The C4-type zinc-finger motif lies at 20–67; the sequence is RPVPGIEVADEQQTLKATFTEPTIECPECHALVTRTAISFNAYVCPQC. The 258-residue stretch at 41–298 folds into the CoA carboxyltransferase N-terminal domain; that stretch reads PTIECPECHA…RLVSKLMNLP (258 aa). Zn(2+) contacts are provided by cysteine 45, cysteine 48, cysteine 64, and cysteine 67.

Belongs to the AccD/PCCB family. As to quaternary structure, acetyl-CoA carboxylase is a heterohexamer composed of biotin carboxyl carrier protein (AccB), biotin carboxylase (AccC) and two subunits each of ACCase subunit alpha (AccA) and ACCase subunit beta (AccD). Zn(2+) serves as cofactor.

The protein localises to the cytoplasm. The catalysed reaction is N(6)-carboxybiotinyl-L-lysyl-[protein] + acetyl-CoA = N(6)-biotinyl-L-lysyl-[protein] + malonyl-CoA. Its pathway is lipid metabolism; malonyl-CoA biosynthesis; malonyl-CoA from acetyl-CoA: step 1/1. In terms of biological role, component of the acetyl coenzyme A carboxylase (ACC) complex. Biotin carboxylase (BC) catalyzes the carboxylation of biotin on its carrier protein (BCCP) and then the CO(2) group is transferred by the transcarboxylase to acetyl-CoA to form malonyl-CoA. The polypeptide is Acetyl-coenzyme A carboxylase carboxyl transferase subunit beta (Acinetobacter baumannii (strain SDF)).